The primary structure comprises 217 residues: UPF0502 protein KPK_3478 (217 aa).

This sequence belongs to the UPF0502 family.

The sequence is that of UPF0502 protein KPK_3478 from Klebsiella pneumoniae (strain 342).